Reading from the N-terminus, the 201-residue chain is MDLVSIILISIGLSMDAFAVSITNGAMISKVTASEGIRIGLFFGGFQALMPLIGWSIGIKFESYIAALDHWIALILLSIIGGKMIYDSIKENRDNKDEIACDYAVGEKKCLNNKTLTLLAIATSIDALAIGVSFAFLKVSIINTIIIIGSITFVICFIGVMIGKKCGKLLKKRAEILGGIVLIFIGIKIFIEHTNILSKIF.

The next 6 membrane-spanning stretches (helical) occupy residues 3-23, 39-59, 65-85, 116-136, 141-161, and 176-196; these read LVSI…VSIT, IGLF…SIGI, IAAL…GKMI, LTLL…SFAF, IINT…IGVM, and ILGG…HTNI.

Belongs to the MntP (TC 9.B.29) family.

Its subcellular location is the cell membrane. Its function is as follows. Probably functions as a manganese efflux pump. This chain is Putative manganese efflux pump MntP, found in Clostridium botulinum (strain Loch Maree / Type A3).